The primary structure comprises 933 residues: Isoleucine--tRNA ligase (933 aa).

The short motif at Pro-57–His-67 is the 'HIGH' region element. L-isoleucyl-5'-AMP is bound at residue Glu-554. Positions Lys-595–Ser-599 match the 'KMSKS' region motif. ATP is bound at residue Lys-598.

Belongs to the class-I aminoacyl-tRNA synthetase family. IleS type 1 subfamily. In terms of assembly, monomer.

It localises to the cytoplasm. It catalyses the reaction tRNA(Ile) + L-isoleucine + ATP = L-isoleucyl-tRNA(Ile) + AMP + diphosphate. Catalyzes the attachment of isoleucine to tRNA(Ile). As IleRS can inadvertently accommodate and process structurally similar amino acids such as valine, to avoid such errors it has two additional distinct tRNA(Ile)-dependent editing activities. One activity is designated as 'pretransfer' editing and involves the hydrolysis of activated Val-AMP. The other activity is designated 'posttransfer' editing and involves deacylation of mischarged Val-tRNA(Ile). The chain is Isoleucine--tRNA ligase from Streptococcus pyogenes serotype M6 (strain ATCC BAA-946 / MGAS10394).